Here is a 431-residue protein sequence, read N- to C-terminus: Levansucrase Lscbeta (431 aa).

5 residues coordinate sucrose: Trp-61, Asp-62, Ala-148, Arg-218, and Asp-219. Asp-62 serves as the catalytic Nucleophile. Glu-303 (proton donor/acceptor) is an active-site residue.

It belongs to the glycosyl hydrolase 68 family. Homodimer.

It catalyses the reaction [6)-beta-D-fructofuranosyl-(2-&gt;](n) alpha-D-glucopyranoside + sucrose = [6)-beta-D-fructofuranosyl-(2-&gt;](n+1) alpha-D-glucopyranoside + D-glucose. Sucrose hydrolase activity is negatively affected by salt concentration. The levan polymerization rate is constant regardless of sucrose concentration. Functionally, catalyzes the synthesis of levan, a fructose polymer, by transferring the fructosyl moiety from sucrose to a growing acceptor molecule. Also displays sucrose hydrolase activity. This Pseudomonas syringae pv. actinidiae protein is Levansucrase Lscbeta.